The sequence spans 400 residues: Probable vacuolar protease A (400 aa).

The N-terminal stretch at 1–18 is a signal peptide; sequence MKGSLLLAGATLLGCTSA. Positions 19–72 are cleaved as a propeptide — activation peptide; sequence KLHSLKLKKVSLKEQLEHADIDVQIKSLGQKYMGIRPEQHEQQMFKEQTPIEAE. In terms of domain architecture, Peptidase A1 spans 87–397; sequence YFSEISIGTP…DLGKGTVGLA (311 aa). Asp105 is a catalytic residue. A disulfide bond links Cys118 and Cys123. The N-linked (GlcNAc...) asparagine glycan is linked to Asn140. Residue Asp289 is part of the active site. Cysteines 323 and 356 form a disulfide. N-linked (GlcNAc...) asparagine glycosylation occurs at Asn340.

It belongs to the peptidase A1 family.

The protein resides in the vacuole lumen. It localises to the secreted. The enzyme catalyses Hydrolysis of proteins with broad specificity for peptide bonds. Cleaves -Leu-Leu-|-Val-Tyr- bond in a synthetic substrate. Does not act on esters of Tyr or Arg.. In terms of biological role, vacuolar aspartic endopeptidase which is probably also secreted and contributes to virulence. The sequence is that of Probable vacuolar protease A (PEP2) from Trichophyton verrucosum (strain HKI 0517).